The chain runs to 98 residues: NADH-ubiquinone oxidoreductase chain 4L (98 aa).

The next 3 membrane-spanning stretches (helical) occupy residues 1–21 (MMSI…GVLI), 28–48 (STLL…ALLI), and 59–79 (APLI…ALLV).

The protein belongs to the complex I subunit 4L family. In terms of assembly, core subunit of respiratory chain NADH dehydrogenase (Complex I) which is composed of 45 different subunits.

The protein localises to the mitochondrion inner membrane. It catalyses the reaction a ubiquinone + NADH + 5 H(+)(in) = a ubiquinol + NAD(+) + 4 H(+)(out). In terms of biological role, core subunit of the mitochondrial membrane respiratory chain NADH dehydrogenase (Complex I) which catalyzes electron transfer from NADH through the respiratory chain, using ubiquinone as an electron acceptor. Part of the enzyme membrane arm which is embedded in the lipid bilayer and involved in proton translocation. In Lagorchestes hirsutus (Rufous hare-wallaby), this protein is NADH-ubiquinone oxidoreductase chain 4L (MT-ND4L).